We begin with the raw amino-acid sequence, 379 residues long: Thiosulfate/3-mercaptopyruvate sulfurtransferase 1, mitochondrial (379 aa).

The N-terminal 56 residues, 1 to 56 (MASTLFSRTFLAASHRLITPSLPQKIFNPATFLSRSLHSQLGSASTAYKSTTWARR), are a transit peptide targeting the mitochondrion. Position 57 is an N-acetylalanine (alanine 57). Rhodanese domains lie at 91–208 (REPD…DVES) and 259–373 (EDPT…LPIE). The Cysteine persulfide intermediate role is filled by cysteine 333.

Expressed in roots, rosette and cauline leaves, stems, flowers and siliques.

Its subcellular location is the mitochondrion. The enzyme catalyses thiosulfate + hydrogen cyanide = thiocyanate + sulfite + 2 H(+). It carries out the reaction 2-oxo-3-sulfanylpropanoate + [thioredoxin]-dithiol = [thioredoxin]-disulfide + hydrogen sulfide + pyruvate + H(+). In terms of biological role, catalyzes the transfer of a sulfur ion from a donor to cyanide or to other thiol compounds. Substrate preference is 3-mercaptopyruvate &gt; thiosulfate. Involved in embryo and seed development. This chain is Thiosulfate/3-mercaptopyruvate sulfurtransferase 1, mitochondrial (STR1), found in Arabidopsis thaliana (Mouse-ear cress).